A 479-amino-acid chain; its full sequence is Long-chain acyl-protein thioester reductase (479 aa).

It belongs to the LuxC family.

The enzyme catalyses a long-chain fatty aldehyde + NADP(+) + CoA = a long-chain fatty acyl-CoA + NADPH + H(+). The protein operates within lipid metabolism; fatty acid reduction for biolumincescence. Its function is as follows. LuxC is the fatty acid reductase enzyme responsible for synthesis of the aldehyde substrate for the luminescent reaction catalyzed by luciferase. This Aliivibrio fischeri (Vibrio fischeri) protein is Long-chain acyl-protein thioester reductase (luxC).